Here is a 429-residue protein sequence, read N- to C-terminus: MDRIRIVGGAQLNGTIPISGAKNAALPLMIAALLSDETLILDNVPRLADVAQLQRILGNHGVDILSAGKRPGDHEYQGQTLHISAKNIIDTTAPYELVSKMRASFWVIAPLLARMHVAKVSLPGGCAIGTRPVDLLIMALEKLGASITIDGGYVVASCPGGLKGAEIEFPKVTVSGTHVALMAATLAKGTTFIGNAACEPEIVDVADCLNKMGAKILGAGTPRITVEGVAKLHGARHTVLPDRIETGTYAMAVAMTGGDVQLSGARPELLQSALDVLTEAGATITVNNDGIRVARNGAGINPVTVTTAPFPGFPTDLQAQLMALMTRAKGDSHITETIFENRFMHVQELARFGARIQLDGETATINGVEKLRGAPVMATDLRASVSLVIAALAAEGETMVNRIYHLDRGFERLEEKLSACGATIERISG.

22–23 (KN) lines the phosphoenolpyruvate pocket. R102 contributes to the UDP-N-acetyl-alpha-D-glucosamine binding site. The active-site Proton donor is the C126. C126 is modified (2-(S-cysteinyl)pyruvic acid O-phosphothioketal). UDP-N-acetyl-alpha-D-glucosamine-binding positions include 131–135 (RPVDL), D316, and I338.

Belongs to the EPSP synthase family. MurA subfamily.

It is found in the cytoplasm. It catalyses the reaction phosphoenolpyruvate + UDP-N-acetyl-alpha-D-glucosamine = UDP-N-acetyl-3-O-(1-carboxyvinyl)-alpha-D-glucosamine + phosphate. Its pathway is cell wall biogenesis; peptidoglycan biosynthesis. In terms of biological role, cell wall formation. Adds enolpyruvyl to UDP-N-acetylglucosamine. The sequence is that of UDP-N-acetylglucosamine 1-carboxyvinyltransferase from Rhodopseudomonas palustris (strain BisA53).